Consider the following 89-residue polypeptide: Small ribosomal subunit protein uS15 (89 aa).

Belongs to the universal ribosomal protein uS15 family. Part of the 30S ribosomal subunit. Forms a bridge to the 50S subunit in the 70S ribosome, contacting the 23S rRNA.

One of the primary rRNA binding proteins, it binds directly to 16S rRNA where it helps nucleate assembly of the platform of the 30S subunit by binding and bridging several RNA helices of the 16S rRNA. Its function is as follows. Forms an intersubunit bridge (bridge B4) with the 23S rRNA of the 50S subunit in the ribosome. The protein is Small ribosomal subunit protein uS15 of Caulobacter vibrioides (strain NA1000 / CB15N) (Caulobacter crescentus).